Consider the following 821-residue polypeptide: Serine/threonine-protein kinase CTR1 (821 aa).

2 disordered regions span residues 1–76 and 481–502; these read MEMP…LNNQ and NPGGENDALAENGGGSLPPSAN. Positions 14 to 25 are enriched in low complexity; it reads SQFSDDQVSVSV. Positions 35–49 are enriched in polar residues; sequence SLSSENRSNHNSGNT. Positions 551-809 constitute a Protein kinase domain; sequence LNIKEKIGAG…TIMDLLRPLI (259 aa). ATP is bound by residues 557 to 565 and Lys-578; that span reads IGAGSFGTV. The active-site Proton acceptor is the Asp-676.

It belongs to the protein kinase superfamily. TKL Ser/Thr protein kinase family. RAF subfamily. In terms of assembly, interacts with EIN2 (via C-terminus). In terms of tissue distribution, expressed in both seedlings and adult plants.

It carries out the reaction L-seryl-[protein] + ATP = O-phospho-L-seryl-[protein] + ADP + H(+). The enzyme catalyses L-threonyl-[protein] + ATP = O-phospho-L-threonyl-[protein] + ADP + H(+). Its activity is regulated as follows. Kinase activity is inhibited by C24:1-ceramide during hypoxia (e.g. submergences). Acts as a negative regulator in the ethylene response pathway. Phosphorylates the cytosolic C-terminal domain of EIN2, preventing the signaling in the absence of ethylene. Interacts with C24:1-ceramide upon hypoxic conditions (e.g. submergences) to in turn regulate EIN2 endoplasmic reticulum (ER)-to-nucleus translocation and EIN3 stabilization. This Arabidopsis thaliana (Mouse-ear cress) protein is Serine/threonine-protein kinase CTR1.